The sequence spans 364 residues: Probable dual-specificity RNA methyltransferase RlmN (364 aa).

E107 functions as the Proton acceptor in the catalytic mechanism. The 234-residue stretch at 113 to 346 (HDYGNSVCVT…ATIRREQGSD (234 aa)) folds into the Radical SAM core domain. C120 and C351 are joined by a disulfide. Residues C127, C131, and C134 each coordinate [4Fe-4S] cluster. S-adenosyl-L-methionine-binding positions include 177 to 178 (GE), S209, 232 to 234 (SLH), and N308. Residue C351 is the S-methylcysteine intermediate of the active site.

Belongs to the radical SAM superfamily. RlmN family. Requires [4Fe-4S] cluster as cofactor.

It localises to the cytoplasm. The enzyme catalyses adenosine(2503) in 23S rRNA + 2 reduced [2Fe-2S]-[ferredoxin] + 2 S-adenosyl-L-methionine = 2-methyladenosine(2503) in 23S rRNA + 5'-deoxyadenosine + L-methionine + 2 oxidized [2Fe-2S]-[ferredoxin] + S-adenosyl-L-homocysteine. The catalysed reaction is adenosine(37) in tRNA + 2 reduced [2Fe-2S]-[ferredoxin] + 2 S-adenosyl-L-methionine = 2-methyladenosine(37) in tRNA + 5'-deoxyadenosine + L-methionine + 2 oxidized [2Fe-2S]-[ferredoxin] + S-adenosyl-L-homocysteine. Functionally, specifically methylates position 2 of adenine 2503 in 23S rRNA and position 2 of adenine 37 in tRNAs. Confers resistance to some classes of antibiotics. The protein is Probable dual-specificity RNA methyltransferase RlmN of Staphylococcus aureus (strain Mu3 / ATCC 700698).